Consider the following 155-residue polypeptide: Transcriptional regulator MraZ (155 aa).

2 SpoVT-AbrB domains span residues 5–52 and 81–124; these read TYEN…SQDR and SMNL…EPAA.

This sequence belongs to the MraZ family. In terms of assembly, forms oligomers.

The protein resides in the cytoplasm. Its subcellular location is the nucleoid. The polypeptide is Transcriptional regulator MraZ (Pelagibacter ubique (strain HTCC1062)).